The chain runs to 1407 residues: Trichohyalin (1407 aa).

Residues methionine 1–glutamine 91 form an S-100-like region. 2 EF-hand domains span residues cysteine 23–proline 48 and histidine 49–alanine 84. Ca(2+) contacts are provided by aspartate 32, aspartate 62, aspartate 64, aspartate 66, and glutamate 73. Disordered stretches follow at residues glutamate 148–glutamine 172, leucine 218–glutamine 237, arginine 362–glutamine 471, glutamate 486–arginine 587, arginine 1014–arginine 1033, lysine 1062–glutamine 1082, and glutamate 1313–proline 1407. 4 stretches are compositionally biased toward basic and acidic residues: residues arginine 362–glutamate 381, arginine 396–arginine 424, serine 447–glutamine 471, and glutamine 554–arginine 587. The span at glutamate 1313–valine 1376 shows a compositional bias: basic and acidic residues.

Belongs to the S100-fused protein family. In terms of assembly, homodimer. Post-translationally, substrate of transglutaminase. Some 200 arginines are probably converted to citrullines by peptidylarginine deimidase. Found in the hard keratinizing tissues such as the inner root sheath (IRS) of hair follicles and medulla, and in the filiform papillae of dorsal tongue epithelium.

Functionally, intermediate filament-associated protein that associates in regular arrays with keratin intermediate filaments (KIF) of the inner root sheath cells of the hair follicle and the granular layer of the epidermis. It later becomes cross-linked to KIF by isodipeptide bonds. It may serve as scaffold protein, together with involucrin, in the organization of the cell envelope or even anchor the cell envelope to the KIF network. It may be involved in its own calcium-dependent postsynthetic processing during terminal differentiation. This chain is Trichohyalin (TCHH), found in Oryctolagus cuniculus (Rabbit).